We begin with the raw amino-acid sequence, 247 residues long: 1-(5-phosphoribosyl)-5-[(5-phosphoribosylamino)methylideneamino] imidazole-4-carboxamide isomerase 1 (247 aa).

Residue glutamate 8 is the Proton acceptor of the active site. Aspartate 128 (proton donor) is an active-site residue.

It belongs to the HisA/HisF family.

Its subcellular location is the cytoplasm. It catalyses the reaction 1-(5-phospho-beta-D-ribosyl)-5-[(5-phospho-beta-D-ribosylamino)methylideneamino]imidazole-4-carboxamide = 5-[(5-phospho-1-deoxy-D-ribulos-1-ylimino)methylamino]-1-(5-phospho-beta-D-ribosyl)imidazole-4-carboxamide. It functions in the pathway amino-acid biosynthesis; L-histidine biosynthesis; L-histidine from 5-phospho-alpha-D-ribose 1-diphosphate: step 4/9. This is 1-(5-phosphoribosyl)-5-[(5-phosphoribosylamino)methylideneamino] imidazole-4-carboxamide isomerase 1 from Ruegeria sp. (strain TM1040) (Silicibacter sp.).